Reading from the N-terminus, the 750-residue chain is MGRSESQMDITDINAPKPKKKQRWTPLEISLSVLVLLLTIIAVTMIALYATYDDGICKSSDCIKSAARLIQNMDASVEPCTDFFKYACGGWLKRNVIPETSSRYSNFDILRDELEVILKDVLQEPKTEDIVAVQKAKTLYRSCINESAIDSRGGQPLLKLLPDIYGWPVASDNWDQTYGTSWTAEKSIAQLNSKYGKKVLINFFVGTDDKNSTQHIIHFDQPRLGLPSRDYYECTGIYKEACTAYVDFMISVARLIRQEQSLPIDENQLSLEMNKVMELEKEIANATTKPEDRNDPMLLYNKMTLAKLQNNFSLEVNGKSFSWSNFTNEIMSTVNINIQNEEEVVVYAPEYLTKLKPILTKYSPRDLQNLMSWRFIMDLVSSLSRNYKESRNAFRKALYGTTSETATWRRCANYVNGNMENAVGRLYVEAAFAGESKHVVEDLIAQIREVFIQTLDDLTWMDAETKKKAEEKALAIKERIGYPDDIISNENKLNNEYLELNYREDEYFENIIQNLKFSQSKQLKKLREKVDKDEWISGAAVVNAFYSSGRNQIVFPAGILQPPFFSAQQSNSLNYGGIGMVIGHEITHGFDDNGRNFNKDGDLVDWWTQQSANNFKDQSQCMVYQYGNFSWDLAGGQHLNGINTLGENIADNGGIGQAYRAYQNYVKKNGEEKLLPGLDLNHKQLFFLNFAQVWCGTYRPEYAVNSIKTDVHSPGNFRIIGTLQNSAEFADAFHCRKNSYMNPERKCRVW.

The N-myristoyl glycine moiety is linked to residue Gly2. Topologically, residues 2 to 28 (GRSESQMDITDINAPKPKKKQRWTPLE) are cytoplasmic. Phosphoserine is present on residues Ser4 and Ser6. Residues 16-23 (PKPKKKQR) carry the Stop-transfer sequence motif. Residues 29–51 (ISLSVLVLLLTIIAVTMIALYAT) form a helical; Signal-anchor for type II membrane protein membrane-spanning segment. Over 52 to 750 (YDDGICKSSD…MNPERKCRVW (699 aa)) the chain is Extracellular. Positions 56 to 750 (ICKSSDCIKS…MNPERKCRVW (695 aa)) constitute a Peptidase M13 domain. 6 cysteine pairs are disulfide-bonded: Cys57–Cys62, Cys80–Cys735, Cys88–Cys695, Cys143–Cys411, Cys234–Cys242, and Cys621–Cys747. Arg103 is an a peptide binding site. Residues Asn145 and Asn211 are each glycosylated (N-linked (GlcNAc...) asparagine). N-linked (GlcNAc...) asparagine glycans are attached at residues Asn285, Asn311, and Asn325. His584 is a Zn(2+) binding site. Residue Glu585 is part of the active site. Residue His588 coordinates Zn(2+). Residue Asn628 is glycosylated (N-linked (GlcNAc...) asparagine). Glu647 contacts Zn(2+). Asp651 serves as the catalytic Proton donor.

This sequence belongs to the peptidase M13 family. Zn(2+) serves as cofactor. In terms of processing, myristoylation is a determinant of membrane targeting. Post-translationally, glycosylation at Asn-628 is necessary both for surface expression and neutral endopeptidase activity.

The protein resides in the cell membrane. It carries out the reaction Preferential cleavage of polypeptides between hydrophobic residues, particularly with Phe or Tyr at P1'.. The enzyme catalyses substance P + H2O = substance P(1-9) + L-Leu-L-Met-NH2. It catalyses the reaction substance P + H2O = substance P(1-7) + L-Phe-Gly-L-Leu-L-Met-NH2. The catalysed reaction is neurotensin + H2O = neurotensin(1-11) + L-isoleucyl-L-leucine. It carries out the reaction neurotensin + H2O = neurotensin(1-10) + L-tyrosyl-L-isoleucyl-L-leucine. Functionally, thermolysin-like specificity, but is almost confined on acting on polypeptides of up to 30 amino acids. Biologically important in the destruction of opioid peptides such as Met- and Leu-enkephalins by cleavage of a Gly-Phe bond. Catalyzes cleavage of bradykinin, substance P and neurotensin peptides. Able to cleave angiotensin-1, angiotensin-2 and angiotensin 1-9. Involved in the degradation of the atrial natriuretic factor (ANF). Displays UV-inducible elastase activity toward skin preelastic and elastic fibers. This is Neprilysin from Mus musculus (Mouse).